The chain runs to 157 residues: Protein Smg homolog (157 aa).

Belongs to the Smg family.

This Shewanella woodyi (strain ATCC 51908 / MS32) protein is Protein Smg homolog.